A 160-amino-acid chain; its full sequence is Major pollen allergen Bet v 1-M/N (160 aa).

Lysine 55, tyrosine 82, tyrosine 84, and asparagine 101 together coordinate brassinolide.

Belongs to the BetVI family.

It localises to the cytoplasm. In terms of biological role, may be a general steroid carrier protein. This is Major pollen allergen Bet v 1-M/N (BETV1M) from Betula pendula (European white birch).